The sequence spans 264 residues: uncharacterized protein (264 aa).

Residues 182–198 (TVTGVSNALGFIIAALL) form a helical membrane-spanning segment.

To E.coli YjiC.

It localises to the membrane. This is an uncharacterized protein from Escherichia coli (strain K12).